Reading from the N-terminus, the 250-residue chain is Type III pantothenate kinase (250 aa).

6–13 (DVGNTNTV) provides a ligand contact to ATP. 103–106 (GADR) contacts substrate. Aspartate 105 functions as the Proton acceptor in the catalytic mechanism. Aspartate 125 contributes to the K(+) binding site. An ATP-binding site is contributed by threonine 128. Threonine 180 lines the substrate pocket.

Belongs to the type III pantothenate kinase family. In terms of assembly, homodimer. NH4(+) is required as a cofactor. K(+) serves as cofactor.

Its subcellular location is the cytoplasm. It carries out the reaction (R)-pantothenate + ATP = (R)-4'-phosphopantothenate + ADP + H(+). The protein operates within cofactor biosynthesis; coenzyme A biosynthesis; CoA from (R)-pantothenate: step 1/5. Functionally, catalyzes the phosphorylation of pantothenate (Pan), the first step in CoA biosynthesis. The sequence is that of Type III pantothenate kinase from Frankia casuarinae (strain DSM 45818 / CECT 9043 / HFP020203 / CcI3).